Reading from the N-terminus, the 575-residue chain is Pre-hexon-linking protein IIIa (575 aa).

Residues 1–95 (MTSSDTFLAL…DLLNRAYTWN (95 aa)) are peripentonal hexon-tethering domain. Positions 129–243 (ANASLLTQFF…FYDYGAMEPG (115 aa)) are binding to hexon-linking protein. Ser497 is modified (phosphoserine; by host). Positions 515 to 575 (GGPGFFASLR…SRRGRKLRFY (61 aa)) are excised as a propeptide. Residues 525–549 (PSIGSRQPTGTAVGLRPTTPYSGSG) are disordered.

The protein belongs to the adenoviridae hexon-linking protein IIIa family. As to quaternary structure, interacts with hexon proteins; this interaction tethers the peripentonal hexons to hexons situated in the facet. Interacts with the penton protein (via N-terminus). Interacts with packaging protein 3; this interaction is required to promote correct genome packaging. Cleaved near the C-terminus by the viral protease during virion maturation to form the mature protein.

The protein localises to the virion. Its subcellular location is the host nucleus. In terms of biological role, structural component of the virion that acts as a cement protein on the capsid exterior which mediates the interactions between the hexons, including the peripentonal hexons, and reaches all the way to the penton vertices. Two hexon linking proteins IIIa, one from each facet, stabilize the unique edge interface between a pair of facets. As the virus enters the host cell, hexon linking proteins IIIa are shed concomitant with virion acidification in the endosome. During virus assembly, seems to play a role in the serotype specificity of the packaging of viral DNA via its interaction with packaging protein 3. This is Pre-hexon-linking protein IIIa from Galliformes (FAdV-1).